Reading from the N-terminus, the 184-residue chain is uncharacterized protein (184 aa).

Residues 146–177 (HPKTSLAQQPNAKATQPPLSKETLNTAKETDP) form a disordered region. Residues 150–172 (SLAQQPNAKATQPPLSKETLNTA) are compositionally biased toward polar residues.

This is an uncharacterized protein from Picosynechococcus sp. (strain ATCC 27264 / PCC 7002 / PR-6) (Agmenellum quadruplicatum).